Here is a 173-residue protein sequence, read N- to C-terminus: MNKFATLAVIFCACIVGSCYANYGGQQSYGQRSYGQDSSAASAASSAAAAGAEGQQRYERPVEIIAGGYRGSYAPEILRPIQVSGGYGGERRGYNGGNYRRAGYGPRWTVQPAGATLLYPGQNNYKAYVSPPEYSKVILPIRPAAPVAKLFVPENQYGNQYVSQYSAPRSSGY.

The N-terminal stretch at methionine 1–alanine 21 is a signal peptide.

Belongs to the chorion protein S19 family.

The protein localises to the secreted. Functionally, chorion membrane (egg shell) protein; plays a role in protecting the egg from the environment. The polypeptide is Chorion protein S19 (Cp19) (Drosophila melanogaster (Fruit fly)).